A 289-amino-acid chain; its full sequence is S-methyl-5'-thioadenosine phosphorylase (289 aa).

Phosphate-binding positions include serine 11, 53 to 54 (RH), and 86 to 87 (SA). Substrate is bound at residue methionine 187. Threonine 188 is a binding site for phosphate. Residue 211–213 (DYD) coordinates substrate.

It belongs to the PNP/MTAP phosphorylase family. MTAP subfamily. In terms of assembly, homohexamer. Dimer of a homotrimer.

The catalysed reaction is S-methyl-5'-thioadenosine + phosphate = 5-(methylsulfanyl)-alpha-D-ribose 1-phosphate + adenine. The protein operates within amino-acid biosynthesis; L-methionine biosynthesis via salvage pathway; S-methyl-5-thio-alpha-D-ribose 1-phosphate from S-methyl-5'-thioadenosine (phosphorylase route): step 1/1. Its function is as follows. Catalyzes the reversible phosphorylation of S-methyl-5'-thioadenosine (MTA) to adenine and 5-methylthioribose-1-phosphate. Involved in the breakdown of MTA, a major by-product of polyamine biosynthesis. Responsible for the first step in the methionine salvage pathway after MTA has been generated from S-adenosylmethionine. Has broad substrate specificity with 6-aminopurine nucleosides as preferred substrates. The polypeptide is S-methyl-5'-thioadenosine phosphorylase (Thermosynechococcus vestitus (strain NIES-2133 / IAM M-273 / BP-1)).